The chain runs to 331 residues: Phosphate acyltransferase (331 aa).

The protein belongs to the PlsX family. In terms of assembly, homodimer. Probably interacts with PlsY.

The protein resides in the cytoplasm. It carries out the reaction a fatty acyl-[ACP] + phosphate = an acyl phosphate + holo-[ACP]. The protein operates within lipid metabolism; phospholipid metabolism. In terms of biological role, catalyzes the reversible formation of acyl-phosphate (acyl-PO(4)) from acyl-[acyl-carrier-protein] (acyl-ACP). This enzyme utilizes acyl-ACP as fatty acyl donor, but not acyl-CoA. This chain is Phosphate acyltransferase, found in Ureaplasma urealyticum serovar 10 (strain ATCC 33699 / Western).